A 101-amino-acid chain; its full sequence is Urease subunit beta (101 aa).

The protein belongs to the urease beta subunit family. As to quaternary structure, heterotrimer of UreA (gamma), UreB (beta) and UreC (alpha) subunits. Three heterotrimers associate to form the active enzyme.

The protein localises to the cytoplasm. The catalysed reaction is urea + 2 H2O + H(+) = hydrogencarbonate + 2 NH4(+). It functions in the pathway nitrogen metabolism; urea degradation; CO(2) and NH(3) from urea (urease route): step 1/1. In Burkholderia mallei (strain NCTC 10247), this protein is Urease subunit beta.